Here is a 494-residue protein sequence, read N- to C-terminus: Prenylcysteine oxidase 1-like (494 aa).

The first 22 residues, 1–22 (MARAAPLLAALTALLAAAAAGG), serve as a signal peptide directing secretion. N-linked (GlcNAc...) asparagine glycosylation occurs at N342.

This sequence belongs to the prenylcysteine oxidase family. It depends on FAD as a cofactor.

Its subcellular location is the secreted. Likely to have oxidoreductase activity. Required in the mevalonate pathway to regulate prenylation and enhances the bactericidal activity of neutrophils. This Homo sapiens (Human) protein is Prenylcysteine oxidase 1-like (PCYOX1L).